Consider the following 422-residue polypeptide: Serine hydroxymethyltransferase (422 aa).

(6S)-5,6,7,8-tetrahydrofolate contacts are provided by residues leucine 120 and 124–126 (GHL). An N6-(pyridoxal phosphate)lysine modification is found at lysine 228.

This sequence belongs to the SHMT family. As to quaternary structure, homodimer. The cofactor is pyridoxal 5'-phosphate.

It localises to the cytoplasm. It carries out the reaction (6R)-5,10-methylene-5,6,7,8-tetrahydrofolate + glycine + H2O = (6S)-5,6,7,8-tetrahydrofolate + L-serine. It functions in the pathway one-carbon metabolism; tetrahydrofolate interconversion. The protein operates within amino-acid biosynthesis; glycine biosynthesis; glycine from L-serine: step 1/1. Functionally, catalyzes the reversible interconversion of serine and glycine with tetrahydrofolate (THF) serving as the one-carbon carrier. This reaction serves as the major source of one-carbon groups required for the biosynthesis of purines, thymidylate, methionine, and other important biomolecules. Also exhibits THF-independent aldolase activity toward beta-hydroxyamino acids, producing glycine and aldehydes, via a retro-aldol mechanism. This Actinobacillus succinogenes (strain ATCC 55618 / DSM 22257 / CCUG 43843 / 130Z) protein is Serine hydroxymethyltransferase.